Reading from the N-terminus, the 266-residue chain is Proteasome subunit alpha type-1 (266 aa).

Positions D235–E266 are disordered. Residues D249–E266 are compositionally biased toward acidic residues.

Belongs to the peptidase T1A family. As to quaternary structure, the 26S proteasome consists of a 20S proteasome core and two 19S regulatory subunits. The 20S proteasome core is composed of 28 subunits that are arranged in four stacked rings, resulting in a barrel-shaped structure. The two end rings are each formed by seven alpha subunits, and the two central rings are each formed by seven beta subunits. The catalytic chamber with the active sites is on the inside of the barrel.

It is found in the cytoplasm. The protein resides in the nucleus. Functionally, the proteasome is a multicatalytic proteinase complex which is characterized by its ability to cleave peptides with Arg, Phe, Tyr, Leu, and Glu adjacent to the leaving group at neutral or slightly basic pH. The proteasome has an ATP-dependent proteolytic activity. The protein is Proteasome subunit alpha type-1 of Trypanosoma brucei rhodesiense.